The primary structure comprises 430 residues: MKTELSQKLFEKANDLFPGGVNSPVRAFKGVGGTPRFIARAKGSHIVDVDGNDYVDYVLSWGPMIVGHCHPEVMRAVQDAMKEGSSFGAPSPREILLAELVRERMPWVEKMRFVSSGTEATTSAIRVARGFTGRDDIVKFDGCYHGAGDPLLVKAGSGVETLGLPDSPGVPADVARHTLTAPYNDLPALEKVFEAKGASIAAVILEPVVGNMGVLVPRPGFLQGVHDLCKKHGALFIVDEVMTGFRLSSGGACGLYGLRPDLVTFGKVIGAGLPVGAFGGRRDVMDRVAPAGPIYQAGTLSGNPMAMAAGHAALKLMTEAAYRKLETLSAALADGLSAAAAEAKVPVQVNRVGSMLTVFFSHKPVFDAATARACNTRRFGAFFHAMLEHGAYLPPSQFEAAFLSTAHTDDDVARTVAAARVAFAEAAKVA.

The residue at position 267 (Lys267) is an N6-(pyridoxal phosphate)lysine.

It belongs to the class-III pyridoxal-phosphate-dependent aminotransferase family. HemL subfamily. As to quaternary structure, homodimer. Pyridoxal 5'-phosphate is required as a cofactor.

It is found in the cytoplasm. It catalyses the reaction (S)-4-amino-5-oxopentanoate = 5-aminolevulinate. It participates in porphyrin-containing compound metabolism; protoporphyrin-IX biosynthesis; 5-aminolevulinate from L-glutamyl-tRNA(Glu): step 2/2. The protein is Glutamate-1-semialdehyde 2,1-aminomutase of Anaeromyxobacter dehalogenans (strain 2CP-C).